A 355-amino-acid polypeptide reads, in one-letter code: Magnesium-chelatase subunit ChlI (355 aa).

Residue 47 to 54 (GDRGTGKS) participates in ATP binding.

Belongs to the Mg-chelatase subunits D/I family.

It localises to the plastid. It is found in the chloroplast. It catalyses the reaction protoporphyrin IX + Mg(2+) + ATP + H2O = Mg-protoporphyrin IX + ADP + phosphate + 3 H(+). It functions in the pathway porphyrin-containing compound metabolism; chlorophyll biosynthesis. Involved in chlorophyll biosynthesis; introduces a magnesium ion into protoporphyrin IX to yield Mg-protoporphyrin IX. This is Magnesium-chelatase subunit ChlI (chlI) from Pyropia yezoensis (Susabi-nori).